A 595-amino-acid chain; its full sequence is Coagulation factor XII (595 aa).

Positions 1 to 19 (MTALLFLGSLLMSLDLTLS) are cleaved as a signal peptide. The region spanning 41 to 89 (VDGKLCHFPFQYHRRLYHKCIHKGQPGSRPWCATTPNFDEDQQWGYCLE) is the Fibronectin type-II domain. Intrachain disulfides connect cysteine 46–cysteine 72, cysteine 60–cysteine 87, cysteine 97–cysteine 109, cysteine 103–cysteine 118, cysteine 120–cysteine 129, cysteine 134–cysteine 162, cysteine 160–cysteine 169, cysteine 177–cysteine 188, cysteine 182–cysteine 197, cysteine 199–cysteine 208, cysteine 216–cysteine 294, cysteine 237–cysteine 276, and cysteine 265–cysteine 289. The EGF-like 1 domain maps to 93–130 (VKDHCSKHSPCHKGGTCVNTPNGPHCLCPEHLTGKHCQ). O-linked (Fuc) threonine glycosylation is present at threonine 108. Residues 132-172 (EKCFESQLLKFFHENEIWFRTGPGGVARCQCKGPQAVCKLL) form the Fibronectin type-I domain. In terms of domain architecture, EGF-like 2 spans 173-209 (TSQVCRVNPCLNGGTCLLVEDHRLCHCPAGYAGPFCD). Positions 215–294 (TCYEDRGLSY…SWDYCDLEQC (80 aa)) constitute a Kringle domain. An N-linked (GlcNAc...) asparagine glycan is attached at asparagine 248. Threonine 298 carries O-linked (GalNAc...) threonine glycosylation. The disordered stretch occupies residues 302–332 (PVSPESHDMLKPRPPILQSSPRDSTRNQNVV). O-linked (GalNAc...) serine glycosylation occurs at serine 307. Residues 318–332 (LQSSPRDSTRNQNVV) are compositionally biased toward polar residues. Residue threonine 326 is glycosylated (O-linked (GalNAc...) threonine). Intrachain disulfides connect cysteine 340-cysteine 466, cysteine 378-cysteine 394, cysteine 386-cysteine 455, cysteine 417-cysteine 420, cysteine 480-cysteine 549, cysteine 512-cysteine 528, and cysteine 539-cysteine 570. One can recognise a Peptidase S1 domain in the interval 354 to 594 (VVGGLVALPG…YLDWIQEHTA (241 aa)). The active-site Charge relay system is histidine 393. An N-linked (GlcNAc...) asparagine glycan is attached at asparagine 414. Aspartate 442 functions as the Charge relay system in the catalytic mechanism. Serine 543 functions as the Charge relay system in the catalytic mechanism.

This sequence belongs to the peptidase S1 family. In terms of assembly, interacts with HRG; the interaction, which is enhanced in the presence of zinc ions and inhibited by heparin-binding, inhibits factor XII autoactivation and contact-initiated coagulation. O- and N-glycosylated.

Its subcellular location is the secreted. It carries out the reaction Selective cleavage of Arg-|-Ile bonds in factor VII to form factor VIIa and factor XI to form factor XIa.. Activity is promoted in the presence of negatively charged surfaces. Functionally, factor XII is a serum glycoprotein that participates in the initiation of blood coagulation, fibrinolysis, and the generation of bradykinin and angiotensin. Prekallikrein is cleaved by factor XII to form kallikrein, which then cleaves factor XII first to alpha-factor XIIa and then trypsin cleaves it to beta-factor XIIa. Alpha-factor XIIa activates factor XI to factor XIa. The protein is Coagulation factor XII (F12) of Rattus norvegicus (Rat).